The following is an 81-amino-acid chain: Exodeoxyribonuclease 7 small subunit (81 aa).

Belongs to the XseB family. As to quaternary structure, heterooligomer composed of large and small subunits.

Its subcellular location is the cytoplasm. The catalysed reaction is Exonucleolytic cleavage in either 5'- to 3'- or 3'- to 5'-direction to yield nucleoside 5'-phosphates.. Its function is as follows. Bidirectionally degrades single-stranded DNA into large acid-insoluble oligonucleotides, which are then degraded further into small acid-soluble oligonucleotides. In Nitratidesulfovibrio vulgaris (strain ATCC 29579 / DSM 644 / CCUG 34227 / NCIMB 8303 / VKM B-1760 / Hildenborough) (Desulfovibrio vulgaris), this protein is Exodeoxyribonuclease 7 small subunit.